Consider the following 101-residue polypeptide: MGFKVKVEFLGGLDVISNKVREHSLKVPLEEGEATVKDLIELITKSIIADPKDIPVFIEDDTVRPGILVLINDTDWELEGMEEYVLESGDVFTFTSTLHGG.

Glycine 101 is subject to 1-thioglycine. Glycine 101 participates in a covalent cross-link: Glycyl lysine isopeptide (Gly-Lys) (interchain with K-? in acceptor proteins).

The protein belongs to the URM1 family. C-terminal thiocarboxylation occurs in 2 steps, it is first acyl-adenylated (-COAMP) via the hesA/moeB/thiF part of UBA4, then thiocarboxylated (-COSH) via the rhodanese domain of UBA4.

The protein resides in the cytoplasm. The protein operates within tRNA modification; 5-methoxycarbonylmethyl-2-thiouridine-tRNA biosynthesis. Acts as a sulfur carrier required for 2-thiolation of mcm(5)S(2)U at tRNA wobble positions of cytosolic tRNA(Lys), tRNA(Glu) and tRNA(Gln). Serves as sulfur donor in tRNA 2-thiolation reaction by being thiocarboxylated (-COSH) at its C-terminus by the MOCS3 homolog UBA4. The sulfur is then transferred to tRNA to form 2-thiolation of mcm(5)S(2)U. Prior mcm(5) tRNA modification by the elongator complex is required for 2-thiolation. Also acts as a ubiquitin-like protein (UBL) that is covalently conjugated via an isopeptide bond to lysine residues of target proteins such as AHP1. The thiocarboxylated form serves as substrate for conjugation and oxidative stress specifically induces the formation of UBL-protein conjugates. The sequence is that of Ubiquitin-related modifier 1 from Scheffersomyces stipitis (strain ATCC 58785 / CBS 6054 / NBRC 10063 / NRRL Y-11545) (Yeast).